The primary structure comprises 297 residues: MPELPEVETVRRGLEPALVGACFSHVHLARPDLRFPLPERFAARLTGQRVEALSRRAKYLVADLSSGEALIMHLGMSGRFDVVLPDGRQVSPGDFYLEGAGARAKHDHVSFALSNGARVTYNDVRRFGFMDLVPAAELATCRHFAGMGIEPLGNELSGEAVARLFRGRRTPLKAALLDQRLIAGLGNIYVCEALHRARLHPETPAGALADAAGRPTKAARLLAEVIRDVLTEAVAAGGSTLRDYVHTDGTKGAFQHAFRVYDREGLACTARGCRGVVRRVVQSGRSTFFCEVCQPAR.

Pro2 acts as the Schiff-base intermediate with DNA in catalysis. Glu3 functions as the Proton donor in the catalytic mechanism. Lys58 serves as the catalytic Proton donor; for beta-elimination activity. DNA contacts are provided by His106, Arg125, and Arg168. The segment at 259-295 adopts an FPG-type zinc-finger fold; the sequence is RVYDREGLACTARGCRGVVRRVVQSGRSTFFCEVCQP. Arg285 serves as the catalytic Proton donor; for delta-elimination activity.

The protein belongs to the FPG family. In terms of assembly, monomer. Zn(2+) serves as cofactor.

The catalysed reaction is Hydrolysis of DNA containing ring-opened 7-methylguanine residues, releasing 2,6-diamino-4-hydroxy-5-(N-methyl)formamidopyrimidine.. It catalyses the reaction 2'-deoxyribonucleotide-(2'-deoxyribose 5'-phosphate)-2'-deoxyribonucleotide-DNA = a 3'-end 2'-deoxyribonucleotide-(2,3-dehydro-2,3-deoxyribose 5'-phosphate)-DNA + a 5'-end 5'-phospho-2'-deoxyribonucleoside-DNA + H(+). Involved in base excision repair of DNA damaged by oxidation or by mutagenic agents. Acts as a DNA glycosylase that recognizes and removes damaged bases. Has a preference for oxidized purines, such as 7,8-dihydro-8-oxoguanine (8-oxoG). Has AP (apurinic/apyrimidinic) lyase activity and introduces nicks in the DNA strand. Cleaves the DNA backbone by beta-delta elimination to generate a single-strand break at the site of the removed base with both 3'- and 5'-phosphates. The sequence is that of Formamidopyrimidine-DNA glycosylase from Methylobacterium nodulans (strain LMG 21967 / CNCM I-2342 / ORS 2060).